Consider the following 205-residue polypeptide: Spermatogenesis-associated protein 24 (205 aa).

Residues 17-166 (LAFDQLRDVI…QQRQSFRNHM (150 aa)) adopt a coiled-coil conformation. The segment at 138-185 (EDILNGKENEIKELQQVISQQRQSFRNHMSDFRIQKQQETYMAQVLDQ) is required for interaction with CBX5 and TBPL1. The segment at 182-205 (VLDQKHKKTSGTRRARSRQCSREK) is disordered. The span at 186–205 (KHKKTSGTRRARSRQCSREK) shows a compositional bias: basic residues.

This sequence belongs to the SPATA24 family. In terms of assembly, homodimer. Interacts with CBX3, CBX5, GMNN, GTF2B, TBPL1 and the polycomb proteins PHCF2, RNF2 and SCMH1 but not with CBX1 or PCGF2. Highly expressed in the testis and is mainly localized in the spermatids. Also expressed in the lung, heart, spleen and epididymis.

The protein resides in the cytoplasm. The protein localises to the nucleus. It localises to the nucleolus. It is found in the nucleoplasm. In terms of biological role, binds DNA with high affinity but does not bind to TATA boxes. Synergises with GMNN and TBP in activation of TATA box-containing promoters and with GMNN and TBPL1 in activation of the NF1 TATA-less promoter. May play a role in cytoplasm movement and removal during spermiogenesis. The sequence is that of Spermatogenesis-associated protein 24 (Spata24) from Rattus norvegicus (Rat).